We begin with the raw amino-acid sequence, 94 residues long: DNA-directed RNA polymerase subunit omega (94 aa).

Belongs to the RNA polymerase subunit omega family. In terms of assembly, the RNAP catalytic core consists of 2 alpha, 1 beta, 1 beta' and 1 omega subunit. When a sigma factor is associated with the core the holoenzyme is formed, which can initiate transcription.

It carries out the reaction RNA(n) + a ribonucleoside 5'-triphosphate = RNA(n+1) + diphosphate. Promotes RNA polymerase assembly. Latches the N- and C-terminal regions of the beta' subunit thereby facilitating its interaction with the beta and alpha subunits. The polypeptide is DNA-directed RNA polymerase subunit omega (Bifidobacterium longum (strain DJO10A)).